Reading from the N-terminus, the 86-residue chain is NADH-ubiquinone oxidoreductase chain 4L (86 aa).

A run of 2 helical transmembrane segments spans residues 22 to 42 (LLVT…LLVY) and 52 to 72 (FIFL…LVSL).

Belongs to the complex I subunit 4L family.

The protein resides in the mitochondrion membrane. It catalyses the reaction a ubiquinone + NADH + 5 H(+)(in) = a ubiquinol + NAD(+) + 4 H(+)(out). In terms of biological role, core subunit of the mitochondrial membrane respiratory chain NADH dehydrogenase (Complex I) that is believed to belong to the minimal assembly required for catalysis. Complex I functions in the transfer of electrons from NADH to the respiratory chain. The immediate electron acceptor for the enzyme is believed to be ubiquinone. This chain is NADH-ubiquinone oxidoreductase chain 4L (ND4L), found in Artemia salina (Brine shrimp).